The sequence spans 570 residues: Sulfite reductase [NADPH] hemoprotein beta-component (570 aa).

[4Fe-4S] cluster-binding residues include cysteine 434, cysteine 440, cysteine 479, and cysteine 483. Cysteine 483 contributes to the siroheme binding site.

This sequence belongs to the nitrite and sulfite reductase 4Fe-4S domain family. In terms of assembly, alpha(8)-beta(8). The alpha component is a flavoprotein, the beta component is a hemoprotein. The cofactor is siroheme. [4Fe-4S] cluster is required as a cofactor.

It carries out the reaction hydrogen sulfide + 3 NADP(+) + 3 H2O = sulfite + 3 NADPH + 4 H(+). It functions in the pathway sulfur metabolism; hydrogen sulfide biosynthesis; hydrogen sulfide from sulfite (NADPH route): step 1/1. In terms of biological role, component of the sulfite reductase complex that catalyzes the 6-electron reduction of sulfite to sulfide. This is one of several activities required for the biosynthesis of L-cysteine from sulfate. This chain is Sulfite reductase [NADPH] hemoprotein beta-component, found in Shigella boydii serotype 4 (strain Sb227).